Consider the following 188-residue polypeptide: Probable nicotinate-nucleotide adenylyltransferase (188 aa).

This sequence belongs to the NadD family.

It carries out the reaction nicotinate beta-D-ribonucleotide + ATP + H(+) = deamido-NAD(+) + diphosphate. It functions in the pathway cofactor biosynthesis; NAD(+) biosynthesis; deamido-NAD(+) from nicotinate D-ribonucleotide: step 1/1. Its function is as follows. Catalyzes the reversible adenylation of nicotinate mononucleotide (NaMN) to nicotinic acid adenine dinucleotide (NaAD). This Acholeplasma laidlawii (strain PG-8A) protein is Probable nicotinate-nucleotide adenylyltransferase.